A 153-amino-acid chain; its full sequence is Putative nuclear shuttle protein (153 aa).

This sequence belongs to the nanoviridae nuclear shuttle protein family.

It localises to the host nucleus. The protein localises to the host cytoplasm. Its function is as follows. Putative nuclear shuttle protein. This Trifolium subterraneum (Subterranean clover) protein is Putative nuclear shuttle protein (DNA-N).